We begin with the raw amino-acid sequence, 423 residues long: Histidine--tRNA ligase (423 aa).

Belongs to the class-II aminoacyl-tRNA synthetase family. Homodimer.

It is found in the cytoplasm. The enzyme catalyses tRNA(His) + L-histidine + ATP = L-histidyl-tRNA(His) + AMP + diphosphate + H(+). The protein is Histidine--tRNA ligase of Corynebacterium diphtheriae (strain ATCC 700971 / NCTC 13129 / Biotype gravis).